The following is a 199-amino-acid chain: Large ribosomal subunit protein uL10 (199 aa).

This sequence belongs to the universal ribosomal protein uL10 family. Part of the ribosomal stalk of the 50S ribosomal subunit. The N-terminus interacts with L11 and the large rRNA to form the base of the stalk. The C-terminus forms an elongated spine to which L12 dimers bind in a sequential fashion forming a multimeric L10(L12)X complex.

Forms part of the ribosomal stalk, playing a central role in the interaction of the ribosome with GTP-bound translation factors. This chain is Large ribosomal subunit protein uL10 (rplJ), found in Aquifex aeolicus (strain VF5).